Reading from the N-terminus, the 503-residue chain is Major facilitator superfamily domain-containing protein 4A (503 aa).

The next 12 helical transmembrane spans lie at 19–39 (LTYW…GPTL), 53–73 (ITWV…LGGV), 82–102 (LFLL…IPFC), 105–125 (VGVL…IDTI), 139–159 (AIFL…SPLI), 214–234 (YAFW…FYLI), 289–309 (IWNA…TLFM), 338–358 (GYLP…SIPV), 366–386 (SMLF…LLSQ), 392–412 (MFVG…SMLA), 427–447 (VLVT…GSVM), and 455–475 (FLVC…VLLV). Residues 484-503 (SEDSACKPPGLDGEATSYQS) are disordered.

It belongs to the major facilitator superfamily.

Its subcellular location is the membrane. This is Major facilitator superfamily domain-containing protein 4A (mfsd4a) from Xenopus tropicalis (Western clawed frog).